An 891-amino-acid chain; its full sequence is Translation initiation factor IF-2 (891 aa).

The region spanning 390–559 is the tr-type G domain; sequence NRAPIVTIMG…LLQSDMLELK (170 aa). The interval 399 to 406 is G1; it reads GHVDHGKT. 399 to 406 lines the GTP pocket; it reads GHVDHGKT. The G2 stretch occupies residues 424-428; that stretch reads GITQS. Residues 445–448 form a G3 region; it reads DTPG. GTP is bound by residues 445-449 and 499-502; these read DTPGH and NKID. Positions 499-502 are G4; it reads NKID. The G5 stretch occupies residues 535–537; it reads SAT.

It belongs to the TRAFAC class translation factor GTPase superfamily. Classic translation factor GTPase family. IF-2 subfamily.

It localises to the cytoplasm. Its function is as follows. One of the essential components for the initiation of protein synthesis. Protects formylmethionyl-tRNA from spontaneous hydrolysis and promotes its binding to the 30S ribosomal subunits. Also involved in the hydrolysis of GTP during the formation of the 70S ribosomal complex. This Blochmanniella pennsylvanica (strain BPEN) protein is Translation initiation factor IF-2.